Consider the following 198-residue polypeptide: FMN-dependent NADH:quinone oxidoreductase (198 aa).

FMN-binding positions include 92-95 and 136-139; these read MWNL and SRGG.

This sequence belongs to the azoreductase type 1 family. In terms of assembly, homodimer. It depends on FMN as a cofactor.

The enzyme catalyses 2 a quinone + NADH + H(+) = 2 a 1,4-benzosemiquinone + NAD(+). It catalyses the reaction N,N-dimethyl-1,4-phenylenediamine + anthranilate + 2 NAD(+) = 2-(4-dimethylaminophenyl)diazenylbenzoate + 2 NADH + 2 H(+). Its function is as follows. Quinone reductase that provides resistance to thiol-specific stress caused by electrophilic quinones. In terms of biological role, also exhibits azoreductase activity. Catalyzes the reductive cleavage of the azo bond in aromatic azo compounds to the corresponding amines. This is FMN-dependent NADH:quinone oxidoreductase from Clostridium perfringens (strain ATCC 13124 / DSM 756 / JCM 1290 / NCIMB 6125 / NCTC 8237 / Type A).